A 736-amino-acid chain; its full sequence is DNA ligase (736 aa).

NAD(+) is bound by residues 41-45 (DQEYD), 91-92 (SL), and Glu125. Residue Lys127 is the N6-AMP-lysine intermediate of the active site. Residue Arg148 participates in NAD(+) binding. The disordered stretch occupies residues 170-205 (ELTPLPLAGGAGGGPLDDSGSAPTPDPSRRREGKWN). Glu215, Lys347, and Lys371 together coordinate NAD(+). 4 residues coordinate Zn(2+): Cys463, Cys466, Cys481, and Cys487. A BRCT domain is found at 656–736 (TLDSPVAGKT…GWAEIVAAAG (81 aa)).

It belongs to the NAD-dependent DNA ligase family. LigA subfamily. Mg(2+) is required as a cofactor. It depends on Mn(2+) as a cofactor.

The enzyme catalyses NAD(+) + (deoxyribonucleotide)n-3'-hydroxyl + 5'-phospho-(deoxyribonucleotide)m = (deoxyribonucleotide)n+m + AMP + beta-nicotinamide D-nucleotide.. Its function is as follows. DNA ligase that catalyzes the formation of phosphodiester linkages between 5'-phosphoryl and 3'-hydroxyl groups in double-stranded DNA using NAD as a coenzyme and as the energy source for the reaction. It is essential for DNA replication and repair of damaged DNA. The sequence is that of DNA ligase from Erythrobacter litoralis (strain HTCC2594).